Consider the following 203-residue polypeptide: Transmembrane protein 269 (203 aa).

3 consecutive transmembrane segments (helical) span residues 60–80, 124–144, and 157–177; these read GLAS…LAII, FILC…SYYP, and LVYI…SAFY.

It is found in the membrane. This Homo sapiens (Human) protein is Transmembrane protein 269.